A 245-amino-acid polypeptide reads, in one-letter code: ATP synthase subunit a, chloroplastic (245 aa).

5 consecutive transmembrane segments (helical) span residues 34–54 (TLMT…LSNL), 93–113 (VPFL…GALL), 132–152 (INTT…AGIS), 197–217 (LVIA…LMLL), and 218–238 (GLFT…AYIG).

This sequence belongs to the ATPase A chain family. As to quaternary structure, F-type ATPases have 2 components, CF(1) - the catalytic core - and CF(0) - the membrane proton channel. CF(1) has five subunits: alpha(3), beta(3), gamma(1), delta(1), epsilon(1). CF(0) has four main subunits: a, b, b' and c.

It is found in the plastid. The protein resides in the chloroplast thylakoid membrane. Its function is as follows. Key component of the proton channel; it plays a direct role in the translocation of protons across the membrane. This is ATP synthase subunit a, chloroplastic from Bigelowiella natans (Pedinomonas minutissima).